Reading from the N-terminus, the 30-residue chain is Nattererin-2 (30 aa).

In terms of tissue distribution, expressed by the skin glands.

It is found in the secreted. Probably has antibacterial activity. The chain is Nattererin-2 from Physalaemus nattereri (Cuyaba dwarf frog).